Consider the following 978-residue polypeptide: Regulator of MON1-CCZ1 complex homolog (978 aa).

Low complexity-rich tracts occupy residues 311–351 (TSTP…MISS) and 479–495 (NNNN…NNNN). 4 disordered regions span residues 311 to 363 (TSTP…HKEQ), 474 to 546 (SINQ…NSKT), 558 to 665 (KQQQ…NNHV), and 703 to 727 (EKEK…NNNI). Residues 496–515 (TAQTLNSTGNLSNSISIGGM) are compositionally biased toward polar residues. Residues 516–539 (NTSTDNLTTTTTTSSSISSSPSNS) show a composition bias toward low complexity. Over residues 582 to 591 (GDGGSGGSGG) the composition is skewed to gly residues. 2 stretches are compositionally biased toward low complexity: residues 592-663 (SFYN…NNNN) and 710-727 (NNNN…NNNI). Positions 735–908 (KLELDSKYLI…HPSFDKYIKL (174 aa)) constitute a Mic1 domain. Residues 955 to 978 (NNSSPTLRSSNSLNSSPRLQYSNN) are disordered.

The protein belongs to the RMC1 family.

It is found in the lysosome membrane. Its subcellular location is the late endosome membrane. Functionally, may have a role in autophagy. The polypeptide is Regulator of MON1-CCZ1 complex homolog (Dictyostelium discoideum (Social amoeba)).